Here is a 357-residue protein sequence, read N- to C-terminus: UDP-N-acetylglucosamine--N-acetylmuramyl-(pentapeptide) pyrophosphoryl-undecaprenol N-acetylglucosamine transferase (357 aa).

UDP-N-acetyl-alpha-D-glucosamine-binding positions include 15–17 (TGG), asparagine 124, arginine 165, serine 191, and glutamine 285.

This sequence belongs to the glycosyltransferase 28 family. MurG subfamily.

It is found in the cell inner membrane. The enzyme catalyses di-trans,octa-cis-undecaprenyl diphospho-N-acetyl-alpha-D-muramoyl-L-alanyl-D-glutamyl-meso-2,6-diaminopimeloyl-D-alanyl-D-alanine + UDP-N-acetyl-alpha-D-glucosamine = di-trans,octa-cis-undecaprenyl diphospho-[N-acetyl-alpha-D-glucosaminyl-(1-&gt;4)]-N-acetyl-alpha-D-muramoyl-L-alanyl-D-glutamyl-meso-2,6-diaminopimeloyl-D-alanyl-D-alanine + UDP + H(+). It participates in cell wall biogenesis; peptidoglycan biosynthesis. Its function is as follows. Cell wall formation. Catalyzes the transfer of a GlcNAc subunit on undecaprenyl-pyrophosphoryl-MurNAc-pentapeptide (lipid intermediate I) to form undecaprenyl-pyrophosphoryl-MurNAc-(pentapeptide)GlcNAc (lipid intermediate II). The polypeptide is UDP-N-acetylglucosamine--N-acetylmuramyl-(pentapeptide) pyrophosphoryl-undecaprenol N-acetylglucosamine transferase (Microcystis aeruginosa (strain NIES-843 / IAM M-2473)).